We begin with the raw amino-acid sequence, 234 residues long: ATP synthase subunit a 1 (234 aa).

The next 6 membrane-spanning stretches (helical) occupy residues 29 to 49 (FLVHVTHAWLIMLLLTGVALL), 90 to 110 (LIATLALFILFSNLIALIPGF), 116 to 136 (NLNTNAALALAVFGMTHVVGV), 147 to 167 (FVGPVWWLAPLILPIEIIGHL), 186 to 206 (IVLVIFFTLVPLLLPIPMMLM), and 207 to 227 (GILVAFIQTFVFTLLAMIYIA).

It belongs to the ATPase A chain family. F-type ATPases have 2 components, CF(1) - the catalytic core - and CF(0) - the membrane proton channel. CF(1) has five subunits: alpha(3), beta(3), gamma(1), delta(1), epsilon(1). CF(0) has three main subunits: a(1), b(2) and c(9-12). The alpha and beta chains form an alternating ring which encloses part of the gamma chain. CF(1) is attached to CF(0) by a central stalk formed by the gamma and epsilon chains, while a peripheral stalk is formed by the delta and b chains.

Its subcellular location is the cell inner membrane. In terms of biological role, key component of the proton channel; it plays a direct role in the translocation of protons across the membrane. The protein is ATP synthase subunit a 1 of Syntrophotalea carbinolica (strain DSM 2380 / NBRC 103641 / GraBd1) (Pelobacter carbinolicus).